A 295-amino-acid chain; its full sequence is Probable endonuclease lcl3 (295 aa).

The segment at 1-35 (MRWPPWASDSQAQQQTAKHDEHDERQAAAKSTTTS) is disordered. Residues 17–27 (AKHDEHDERQA) show a composition bias toward basic and acidic residues. A helical membrane pass occupies residues 52–74 (FTEARTIIPTLILTSGFLGAFYI). Positions 96–263 (RSLLGQVTSV…KLRGVGLWKD (168 aa)) constitute a TNase-like domain. The active site involves arginine 147. Aspartate 152 is a Ca(2+) binding site. Residues glutamate 155 and arginine 195 contribute to the active site.

It belongs to the LCL3 family.

The protein localises to the mitochondrion. It localises to the membrane. The sequence is that of Probable endonuclease lcl3 (lcl3) from Neosartorya fischeri (strain ATCC 1020 / DSM 3700 / CBS 544.65 / FGSC A1164 / JCM 1740 / NRRL 181 / WB 181) (Aspergillus fischerianus).